The primary structure comprises 262 residues: Hydroxyethylthiazole kinase (262 aa).

M50 serves as a coordination point for substrate. Residues R125 and T171 each coordinate ATP. G198 provides a ligand contact to substrate.

It belongs to the Thz kinase family. The cofactor is Mg(2+).

It catalyses the reaction 5-(2-hydroxyethyl)-4-methylthiazole + ATP = 4-methyl-5-(2-phosphooxyethyl)-thiazole + ADP + H(+). It functions in the pathway cofactor biosynthesis; thiamine diphosphate biosynthesis; 4-methyl-5-(2-phosphoethyl)-thiazole from 5-(2-hydroxyethyl)-4-methylthiazole: step 1/1. Functionally, catalyzes the phosphorylation of the hydroxyl group of 4-methyl-5-beta-hydroxyethylthiazole (THZ). The chain is Hydroxyethylthiazole kinase from Escherichia coli O45:K1 (strain S88 / ExPEC).